Here is a 467-residue protein sequence, read N- to C-terminus: MKNCEYQQIDPRALRTPSSRTSSTLPCGRKGSQRLRRKWEVFPGKNRFYCDGRIMLARQCGVLPLTIGLIFITSVLFFTFDCPFLVDHLTVFIPVIGGVLFIFVVISLLQTSFTDPGILPRALPDEAADIEKQIDNSGSSTYRPPPRTKEILINDQVVKLKYCFTCKMFRPPRTSHCSLCDNCVERFDHHCPWVGNCVGKRNYRFFYAFIVSLSFLTSFIFGCVITHLTLRSQGGNGFIQAIQDSPASVVELVICFFSIWSILGLSGFHTYLVASNLTTNEDIKGSWSSKRGEESGNPYTYNNIFTNCCVVLCGPMPPSLIDRRGFVPPEDAPQTVTSDAELPAFMAKNDTNMCAQGTKELLESMANSTVIQSTCAPGKPKTAPVTQESLLNTVSITVSPPSKPPSNGCSGRQARRPIDVPCSQRGLKRAALHTHKPMLRLPSPLYSLSDSPLILSDAPDMGFIPLN.

The Cytoplasmic segment spans residues 1–59; it reads MKNCEYQQIDPRALRTPSSRTSSTLPCGRKGSQRLRRKWEVFPGKNRFYCDGRIMLARQ. The chain crosses the membrane as a helical span at residues 60–80; that stretch reads CGVLPLTIGLIFITSVLFFTF. Over 81–88 the chain is Lumenal; it reads DCPFLVDH. Residues 89–109 form a helical membrane-spanning segment; the sequence is LTVFIPVIGGVLFIFVVISLL. Topologically, residues 110–204 are cytoplasmic; that stretch reads QTSFTDPGIL…GNCVGKRNYR (95 aa). Residues 161 to 211 enclose the DHHC domain; sequence KYCFTCKMFRPPRTSHCSLCDNCVERFDHHCPWVGNCVGKRNYRFFYAFIV. The S-palmitoyl cysteine intermediate role is filled by C191. The helical transmembrane segment at 205–225 threads the bilayer; sequence FFYAFIVSLSFLTSFIFGCVI. The Lumenal segment spans residues 226–247; sequence THLTLRSQGGNGFIQAIQDSPA. Residues 248–268 traverse the membrane as a helical segment; sequence SVVELVICFFSIWSILGLSGF. Residues 269–467 are Cytoplasmic-facing; the sequence is HTYLVASNLT…APDMGFIPLN (199 aa).

Belongs to the DHHC palmitoyltransferase family. ERF2/ZDHHC9 subfamily.

The protein resides in the golgi apparatus membrane. It catalyses the reaction L-cysteinyl-[protein] + hexadecanoyl-CoA = S-hexadecanoyl-L-cysteinyl-[protein] + CoA. Its function is as follows. Palmitoyltransferase that catalyzes the addition of palmitate onto various protein substrates, such as CGAS, HRAS and LCK. In Danio rerio (Zebrafish), this protein is Palmitoyltransferase ZDHHC18-A.